We begin with the raw amino-acid sequence, 173 residues long: Macro domain-containing protein in gbd 3'region (173 aa).

Positions 1–173 (MSGEHLQVVH…NYRLYRERLS (173 aa)) constitute a Macro domain.

It belongs to the MacroD-type family.

The sequence is that of Macro domain-containing protein in gbd 3'region from Cupriavidus necator (Alcaligenes eutrophus).